The sequence spans 631 residues: Leucine aminopeptidase 2-2 (631 aa).

Substrate-binding positions include 140 to 142 (QCQ) and 265 to 270 (PYGGME). His294 is a binding site for Zn(2+). The active-site Proton acceptor is the Glu295. Positions 298 and 317 each coordinate Zn(2+). Tyr395 acts as the Proton donor in catalysis.

The protein belongs to the peptidase M1 family. It depends on Zn(2+) as a cofactor.

It localises to the cytoplasm. It is found in the nucleus. The enzyme catalyses an epoxide + H2O = an ethanediol. In terms of biological role, aminopeptidase that preferentially cleaves di- and tripeptides. Also has low epoxide hydrolase activity (in vitro). Can hydrolyze the epoxide leukotriene LTA(4) but it forms preferentially 5,6-dihydroxy-7,9,11,14-eicosatetraenoic acid rather than the cytokine leukotriene B(4) as the product compared to the homologous mammalian enzyme (in vitro). This Meyerozyma guilliermondii (strain ATCC 6260 / CBS 566 / DSM 6381 / JCM 1539 / NBRC 10279 / NRRL Y-324) (Yeast) protein is Leucine aminopeptidase 2-2.